The primary structure comprises 1019 residues: Outer capsid protein P3 (1019 aa).

Belongs to the phytoreovirus inner capsid protein P3 family. As to quaternary structure, homodimer. Homomultimer.

The protein resides in the virion. It is found in the host cytoplasm. In terms of biological role, capsid protein which self-assembles to form the inner icosahedral capsid with a T=2 symmetry, and consisting of 60 P3 dimers. This Rice dwarf virus (isolate Fujian) (RDV) protein is Outer capsid protein P3.